Reading from the N-terminus, the 821-residue chain is Phenylalanine--tRNA ligase beta subunit (821 aa).

The tRNA-binding domain maps to 39–149; the sequence is RTWAEGVVVG…DAVTVGEDVR (111 aa). Residues 409–503 enclose the B5 domain; the sequence is PLERTLTLRL…RLYGYDRFEE (95 aa). Mg(2+) contacts are provided by Asp481, Asp487, Glu490, and Glu491. One can recognise an FDX-ACB domain in the interval 724–820; sequence STYPASDRDL…LVEKYAVTLR (97 aa).

The protein belongs to the phenylalanyl-tRNA synthetase beta subunit family. Type 1 subfamily. As to quaternary structure, tetramer of two alpha and two beta subunits. Mg(2+) is required as a cofactor.

The protein localises to the cytoplasm. The enzyme catalyses tRNA(Phe) + L-phenylalanine + ATP = L-phenylalanyl-tRNA(Phe) + AMP + diphosphate + H(+). The polypeptide is Phenylalanine--tRNA ligase beta subunit (Thermosynechococcus vestitus (strain NIES-2133 / IAM M-273 / BP-1)).